The primary structure comprises 296 residues: POM121-like protein 12 (296 aa).

Disordered stretches follow at residues 1 to 54 (MGAA…SPWP) and 142 to 162 (APPERQESPWRSPGQRARPAG). The segment covering 34 to 52 (SRSPSTPQTTPSPQGRQSP) has biased composition (low complexity).

This sequence belongs to the POM121 family.

The protein is POM121-like protein 12 (POM121L12) of Homo sapiens (Human).